Consider the following 629-residue polypeptide: Embryonic polyadenylate-binding protein (629 aa).

RRM domains lie at 11-89 (ASLY…WSQR), 99-175 (GNVF…HFKS), 191-268 (TNVY…RAQK), and 294-370 (VNLY…LAQR). In terms of domain architecture, PABC spans 539-616 (QEPLTASSLA…AVAVLQAHQA (78 aa)).

It belongs to the polyadenylate-binding protein type-1 family. Interacts with dazl in an RNA-independent manner. The C-terminus can self-associate and also interact with the C-terminus of pabpc1, independently of RNA. RRM 1 and RRM 2 interact with both eif4g1 and paip1, and the C-terminus also interacts with paip1. Prior to oocyte maturation, found in a complex with dazl and pum2 proteins and spdy1 mRNA; pum2 dissociates from the complex during maturation. Interacts with the translation termination factor sup35/erf3.

The protein resides in the cytoplasm. Its function is as follows. Binds and protects the poly(A) tail of mRNA with or without an AU-rich element (ARE) and prevents mRNA deadenylation. Stimulates the translation of mRNAs to which it is bound during early development. The protein is Embryonic polyadenylate-binding protein of Xenopus tropicalis (Western clawed frog).